The sequence spans 283 residues: ATP phosphoribosyltransferase (283 aa).

This sequence belongs to the ATP phosphoribosyltransferase family. Long subfamily. Mg(2+) is required as a cofactor.

It is found in the cytoplasm. It carries out the reaction 1-(5-phospho-beta-D-ribosyl)-ATP + diphosphate = 5-phospho-alpha-D-ribose 1-diphosphate + ATP. It functions in the pathway amino-acid biosynthesis; L-histidine biosynthesis; L-histidine from 5-phospho-alpha-D-ribose 1-diphosphate: step 1/9. With respect to regulation, feedback inhibited by histidine. Its function is as follows. Catalyzes the condensation of ATP and 5-phosphoribose 1-diphosphate to form N'-(5'-phosphoribosyl)-ATP (PR-ATP). Has a crucial role in the pathway because the rate of histidine biosynthesis seems to be controlled primarily by regulation of HisG enzymatic activity. The polypeptide is ATP phosphoribosyltransferase (Phocaeicola vulgatus (strain ATCC 8482 / DSM 1447 / JCM 5826 / CCUG 4940 / NBRC 14291 / NCTC 11154) (Bacteroides vulgatus)).